The sequence spans 2365 residues: TRIO and F-actin-binding protein (2365 aa).

4 disordered regions span residues 48-1106 (VPYC…HEPL), 1168-1554 (HRDA…SERR), 1593-1667 (LPRK…WPKI), and 1679-1751 (AGLE…TSWR). Over residues 132–151 (SDPTSSPDSATPDDTSNSSS) the composition is skewed to low complexity. A Phosphothreonine modification is found at His-221. Composition is skewed to polar residues over residues 239-271 (TLTQ…QAAS), 291-375 (RASS…TPQR), 403-422 (RTSC…SPNR), 429-471 (RTSC…SPNR), 478-520 (RTSC…SPNR), 527-569 (RTSC…SPNR), 576-618 (RTSC…SPNR), 625-650 (RTSC…SPRT), 661-674 (SSPN…NPRT), 683-701 (RASS…TSCA), 709-722 (SSPN…NPRT), 745-785 (RTSC…SPNR), and 807-837 (IRAT…PKTS). The tract at residues 324–348 (STQEDTPRASSTQWNTPRASSPSRS) is essentiel for its aggregation. Gln-457 is subject to Phosphothreonine. Residues 839–854 (TKRDNLRPTCTQRDRT) are compositionally biased toward basic and acidic residues. Polar residues-rich tracts occupy residues 855–898 (QSFS…SSPH), 913–927 (PTQS…PSRS), and 945–994 (DRPQ…TSSP). Residues 1045-1056 (RAPESEPPHHEP) show a composition bias toward basic and acidic residues. Over residues 1195 to 1206 (SMESLAPSTDSL) the composition is skewed to polar residues. 2 stretches are compositionally biased toward basic and acidic residues: residues 1260–1270 (ETRHNLEREEY) and 1303–1319 (GRAE…RKSE). Over residues 1332–1349 (SQQPSQGQSQLLRRQSSP) the composition is skewed to low complexity. Composition is skewed to basic and acidic residues over residues 1378 to 1387 (SPEKRPEGDR) and 1402 to 1411 (TPERELRTQR). The span at 1452–1461 (GGLGPGGWWG) shows a compositional bias: gly residues. Residues 1494-1508 (WEEKPTHELPRELGK) show a composition bias toward basic and acidic residues. Residues 1524-1534 (ESSQSWHSGTP) show a composition bias toward polar residues. Residues 1594 to 1606 (PRKDPAGHRDDLA) are compositionally biased toward basic and acidic residues. A compositionally biased stretch (polar residues) spans 1645–1664 (ALQSQSPVQLPSPACTSTQW). The segment covering 1696 to 1705 (PSLPELQFQP) has biased composition (low complexity). A compositionally biased stretch (basic and acidic residues) spans 1724-1735 (KQADSADKRPAE). The PH domain occupies 1778 to 1887 (LNFKKGWMSI…WIEALRKTVR (110 aa)). Ser-1796 bears the Phosphoserine mark. Disordered stretches follow at residues 1889 to 2017 (TSAP…LTED) and 2174 to 2194 (LSKT…HQSD). An Omega-N-methylarginine modification is found at Arg-1930. Phosphoserine is present on residues Ser-1949 and Ser-1955. Residues 1965-1997 (TPDRLAKQEELERDLAQRSEERRKWFEATDSRT) show a composition bias toward basic and acidic residues. 2 coiled-coil regions span residues 2062 to 2247 (SDGH…NQEL) and 2281 to 2361 (ELEV…SMRN).

In terms of assembly, isoform 1 forms aggregates. Isoform 1 binds to TRIO and F-actin. Isoform 1 may also interact with myosin II. Interacts with HECTD3. Interacts with PJVK. Interacts with TERF1; mediates TERF1 localization to the centrosome. Ubiquitinated by HECTD3, leading to its degradation by the proteasome. In terms of processing, phosphorylation at Thr-457 by PLK1 ensures mitotic progression and is essential for accurate chromosome segregation. Phosphorylation at residues Thr-221 and Thr-457 by kinase NEK2A and PLK1 coordinates TERF1 translocation from telomere to spindle pole. Widely expressed. Highly expressed in heart and placenta. In terms of tissue distribution, expressed in fetal brain, retina and cochlea but is not detectable in the other tissues.

Its subcellular location is the nucleus. It is found in the cytoplasm. It localises to the cytoskeleton. The protein resides in the microtubule organizing center. The protein localises to the centrosome. Its subcellular location is the midbody. It is found in the chromosome. It localises to the telomere. Functionally, regulates actin cytoskeletal organization, cell spreading and cell contraction by directly binding and stabilizing filamentous F-actin and prevents its depolymerization. May also serve as a linker protein to recruit proteins required for F-actin formation and turnover. Essential for correct mitotic progression. Plays a pivotal role in the formation of stereocilia rootlets. The polypeptide is TRIO and F-actin-binding protein (TRIOBP) (Homo sapiens (Human)).